The following is a 345-amino-acid chain: Phenylalanine--tRNA ligase alpha subunit (345 aa).

E259 contributes to the Mg(2+) binding site.

It belongs to the class-II aminoacyl-tRNA synthetase family. Phe-tRNA synthetase alpha subunit type 1 subfamily. Tetramer of two alpha and two beta subunits. Requires Mg(2+) as cofactor.

Its subcellular location is the cytoplasm. The catalysed reaction is tRNA(Phe) + L-phenylalanine + ATP = L-phenylalanyl-tRNA(Phe) + AMP + diphosphate + H(+). The protein is Phenylalanine--tRNA ligase alpha subunit of Lactococcus lactis subsp. cremoris (strain SK11).